The following is a 327-amino-acid chain: o-succinylbenzoate synthase (327 aa).

Residue Lys110 is the Proton donor of the active site. Mg(2+)-binding residues include Asp138, Glu165, and Asp188. Lys212 acts as the Proton acceptor in catalysis.

The protein belongs to the mandelate racemase/muconate lactonizing enzyme family. MenC type 1 subfamily. Requires a divalent metal cation as cofactor.

It carries out the reaction (1R,6R)-6-hydroxy-2-succinyl-cyclohexa-2,4-diene-1-carboxylate = 2-succinylbenzoate + H2O. The protein operates within quinol/quinone metabolism; 1,4-dihydroxy-2-naphthoate biosynthesis; 1,4-dihydroxy-2-naphthoate from chorismate: step 4/7. It functions in the pathway quinol/quinone metabolism; menaquinone biosynthesis. Its function is as follows. Converts 2-succinyl-6-hydroxy-2,4-cyclohexadiene-1-carboxylate (SHCHC) to 2-succinylbenzoate (OSB). This Mycobacterium ulcerans (strain Agy99) protein is o-succinylbenzoate synthase.